Here is a 2620-residue protein sequence, read N- to C-terminus: Highly reducing polyketide synthase tazB (2620 aa).

The tract at residues M1–N22 is disordered. The Ketosynthase family 3 (KS3) domain occupies M1–D416. Basic and acidic residues predominate over residues T9 to N22. Residues C166, H301, and H340 each act as for beta-ketoacyl synthase activity in the active site. The segment at G460 to H481 is disordered. A compositionally biased stretch (low complexity) spans S470 to H481. The segment at V601–D923 is malonyl-CoA:ACP transacylase (MAT) domain. An N-terminal hotdog fold region spans residues H993 to S1128. Residues H993–K1313 are dehydratase (DH) domain. In terms of domain architecture, PKS/mFAS DH spans H993 to E1318. Residue H1025 is the Proton acceptor; for dehydratase activity of the active site. The segment at T1157–E1318 is C-terminal hotdog fold. Catalysis depends on D1225, which acts as the Proton donor; for dehydratase activity. Positions G1379 to Y1680 are methyltransferase (CMet) domain. The interval G1910 to L2227 is enoyl reductase (ER) domain. Residues S2251–V2425 are ketoreductase (KR) domain. One can recognise a Carrier domain in the interval E2539–R2620. An O-(pantetheine 4'-phosphoryl)serine modification is found at S2576.

Its pathway is secondary metabolite biosynthesis. In terms of biological role, highly reducing polyketide synthase; part of the gene cluster that mediates the biosynthesis of azaterrilone A and other azaphilones, a class of fungal metabolites characterized by a highly oxygenated pyrano-quinone bicyclic core and exhibiting a broad range of bioactivities. The first step of the pathway begins with the non-reducing polyketide synthase tazA that assembles one acetyl-CoA starter unit, five malonyl-CoA units, and catalyzes a series of Claisen condensations, methylation, PT-mediated cyclization, and finally releases the first hexaketide precursor through the R-domain. The tazA product then undergoes reduction on its terminal ketone and the following pyran-ring formation by yet undetermined enzyme(s). Dehydration and enoyl reduction, possibly involving the trans-enoyl reductase tazE leads to the next intermediate. TazD is predicted as an acetyltransferase and might catalyze the acetylation steps leading to the synthesis of azaterrilone A. Azaterrilone A is not the final product of the taz pathway and both the highly reducing polyketide synthase tazB and the dual enzyme tazHJ catalyze late steps of the pathway, leading to the production of the 2 final stereoisomers that contain additional polyketide modification whose structures have still to be determined. In Aspergillus terreus (strain NIH 2624 / FGSC A1156), this protein is Highly reducing polyketide synthase tazB.